A 627-amino-acid polypeptide reads, in one-letter code: Coiled-coil domain-containing protein 22 (627 aa).

The sufficient for interaction with COMMD1 stretch occupies residues 1 to 321 (MEEADRILIH…VADIPAASQR (321 aa)). The sufficicient and required for interaction with CCDC93 stretch occupies residues 1–447 (MEEADRILIH…LQDCRELESS (447 aa)). The stretch at 321–384 (RPEQDTRAAQ…SVAEQEQALR (64 aa)) forms a coiled coil. Phosphoserine is present on Ser410. A coiled-coil region spans residues 448–535 (RRLVEIQELH…NSLSGKLDRT (88 aa)).

The protein belongs to the CCDC22 family. As to quaternary structure, component of the commander complex consisting of the CCC subcomplex and the retriever subcomplex. Component of the CCC (COMMD/CCDC22/CCDC93) subcomplex consisting of COMMD1, COMMD2, COMMD3, COMMD4, COMMD5, COMMD6, COMMD7, COMMD8, COMMD9, COMMD10, CCDC22 and CCDC93. Forms a coiled-coil heterodimer with CCDC22; this heterodimer interacts with the guanine nucleotide exchange factor DENND10; the interaction is direct. Interacts with CUL1, CUL2, CUL3, SKP1, BTRC. Interacts with SNX17 and SNX31. Interacts with CPNE1 and CPNE4.

It localises to the endosome. Its subcellular location is the cytoplasm. The protein resides in the cytoskeleton. The protein localises to the microtubule organizing center. It is found in the centrosome. Functionally, component of the commander complex that is essential for endosomal recycling of transmembrane cargos; the Commander complex is composed of composed of the CCC subcomplex and the retriever subcomplex. Component of the CCC complex, which is involved in the regulation of endosomal recycling of surface proteins, including integrins, signaling receptor and channels. Involved in regulation of NF-kappa-B signaling. Promotes ubiquitination of I-kappa-B-kinase subunit IKBKB and its subsequent proteasomal degradation leading to NF-kappa-B activation; the function may involve association with COMMD8 and a CUL1-dependent E3 ubiquitin ligase complex. May down-regulate NF-kappa-B activity via association with COMMD1 and involving a CUL2-dependent E3 ubiquitin ligase complex. Regulates the cellular localization of COMM domain-containing proteins, such as COMMD1 and COMMD10. Component of the CCC complex, which is involved in the regulation of endosomal recycling of surface proteins, including integrins, signaling receptor and channels. The CCC complex associates with SNX17, retriever and WASH complexes to prevent lysosomal degradation and promote cell surface recycling of numerous cargos such as integrins ITGA5:ITGB1. Plays a role in copper ion homeostasis. Involved in copper-dependent ATP7A trafficking between the trans-Golgi network and vesicles in the cell periphery; the function is proposed to depend on its association within the CCC complex and cooperation with the WASH complex on early endosomes. In Rattus norvegicus (Rat), this protein is Coiled-coil domain-containing protein 22.